Here is a 173-residue protein sequence, read N- to C-terminus: NEDD4-binding protein 2-like 1 (173 aa).

The segment at 1 to 35 (MEESFLESFGRLSLRQQQPPPPRPPAPPPLRGTPP) is disordered. A compositionally biased stretch (pro residues) spans 18–32 (QPPPPRPPAPPPLRG).

Interacts with dynactin subunit proteins, including DCTN4, DCTN5 and DCTN5.

Might play a role in adipocyte differentiation and triglyceride accumulation. The sequence is that of NEDD4-binding protein 2-like 1 (N4BP2L1) from Bos taurus (Bovine).